Consider the following 88-residue polypeptide: Small ribosomal subunit protein bS18B (88 aa).

It belongs to the bacterial ribosomal protein bS18 family. Part of the 30S ribosomal subunit. Forms a tight heterodimer with protein bS6.

In terms of biological role, binds as a heterodimer with protein bS6 to the central domain of the 16S rRNA, where it helps stabilize the platform of the 30S subunit. The protein is Small ribosomal subunit protein bS18B (rpsR2) of Mycobacterium bovis (strain ATCC BAA-935 / AF2122/97).